The chain runs to 145 residues: Arginine repressor (145 aa).

This sequence belongs to the ArgR family.

Its subcellular location is the cytoplasm. It functions in the pathway amino-acid biosynthesis; L-arginine biosynthesis [regulation]. Its function is as follows. Regulates arginine biosynthesis genes. This chain is Arginine repressor, found in Streptococcus equi subsp. zooepidemicus (strain H70).